We begin with the raw amino-acid sequence, 121 residues long: MQYVYIFIGGALGALLRYLISFLNTDGGFPIGTLIANLTGAFVMGLLTALTIAFFSNHPTLKKAITTGFLGALTTFSTFQLELIHMFDHQQFITLLLYAVTSYVFGILLCYVGIKLGGGLS.

Helical transmembrane passes span 3 to 23, 35 to 55, 64 to 84, and 92 to 112; these read YVYIFIGGALGALLRYLISFL, IANLTGAFVMGLLTALTIAFF, AITTGFLGALTTFSTFQLELI, and FITLLLYAVTSYVFGILLCYV. Positions 71 and 74 each coordinate Na(+).

This sequence belongs to the fluoride channel Fluc/FEX (TC 1.A.43) family.

The protein resides in the cell membrane. It carries out the reaction fluoride(in) = fluoride(out). Na(+) is not transported, but it plays an essential structural role and its presence is essential for fluoride channel function. Fluoride-specific ion channel. Important for reducing fluoride concentration in the cell, thus reducing its toxicity. This chain is Fluoride-specific ion channel FluC 1, found in Staphylococcus aureus (strain NCTC 8325 / PS 47).